A 133-amino-acid chain; its full sequence is uncharacterized protein (133 aa).

This sequence belongs to the mimivirus L15/L51/R83 family.

This is an uncharacterized protein from Acanthamoeba polyphaga (Amoeba).